We begin with the raw amino-acid sequence, 148 residues long: Deoxyuridine 5'-triphosphate nucleotidohydrolase (148 aa).

Substrate is bound by residues arginine 67 to glycine 69, asparagine 80, leucine 84 to aspartate 86, and methionine 94.

Belongs to the dUTPase family. Requires Mg(2+) as cofactor.

The enzyme catalyses dUTP + H2O = dUMP + diphosphate + H(+). It functions in the pathway pyrimidine metabolism; dUMP biosynthesis; dUMP from dCTP (dUTP route): step 2/2. In terms of biological role, this enzyme is involved in nucleotide metabolism: it produces dUMP, the immediate precursor of thymidine nucleotides and it decreases the intracellular concentration of dUTP so that uracil cannot be incorporated into DNA. The protein is Deoxyuridine 5'-triphosphate nucleotidohydrolase of Burkholderia cenocepacia (strain HI2424).